Here is a 147-residue protein sequence, read N- to C-terminus: 3-dehydroquinate dehydratase (147 aa).

The active-site Proton acceptor is Tyr-23. 3 residues coordinate substrate: Asn-75, His-81, and Asp-88. Residue His-101 is the Proton donor of the active site. Substrate-binding positions include 102–103 (LS) and Arg-112.

Belongs to the type-II 3-dehydroquinase family. As to quaternary structure, homododecamer.

The enzyme catalyses 3-dehydroquinate = 3-dehydroshikimate + H2O. It participates in metabolic intermediate biosynthesis; chorismate biosynthesis; chorismate from D-erythrose 4-phosphate and phosphoenolpyruvate: step 3/7. Catalyzes a trans-dehydration via an enolate intermediate. The sequence is that of 3-dehydroquinate dehydratase from Stenotrophomonas maltophilia (strain K279a).